The following is a 142-amino-acid chain: Ovocleidin-17 (142 aa).

Disulfide bonds link Cys-5–Cys-16, Cys-33–Cys-138, and Cys-113–Cys-130. The region spanning 12-139 (TPGGCLGFFS…CTERNAFVCK (128 aa)) is the C-type lectin domain. Asn-59 carries N-linked (GlcNAc...) asparagine glycosylation. Residues Ser-61 and Ser-67 each carry the phosphoserine modification.

In terms of tissue distribution, expressed in the shell gland mucosa. Not detected in hen liver, magnum, isthmus, cartilage, bone or in egg white or yolk.

It localises to the secreted. Its subcellular location is the extracellular space. The protein localises to the extracellular matrix. May form proteinaceous networks during the construction of the eggshell which then may control the deposition of the mineral phase. The polypeptide is Ovocleidin-17 (Gallus gallus (Chicken)).